A 329-amino-acid polypeptide reads, in one-letter code: COP9 signalosome complex subunit 6 (329 aa).

The MPN domain maps to 44–175 (TRVKAQAACS…VTIYESELHV (132 aa)).

It belongs to the peptidase M67A family. CSN6 subfamily. In terms of assembly, component of the CSN complex, probably composed of CSN1, CSN2, CSN3, CSN4, CSN5, CSN6, CSN7 and CSN8.

Component of the COP9 signalosome complex (CSN), a complex involved in various cellular and developmental processes such as photomorphogenesis and response to hormones. The CSN complex is an essential regulator of the ubiquitin (Ubl) conjugation pathway by mediating the deneddylation of the cullin subunits of SCF-type E3 ligase complexes, leading to decrease the Ubl ligase activity of SCF. Involved in early response to iron deficiency. In Oryza sativa subsp. japonica (Rice), this protein is COP9 signalosome complex subunit 6.